Consider the following 212-residue polypeptide: Large ribosomal subunit protein uL3 (212 aa).

This sequence belongs to the universal ribosomal protein uL3 family. As to quaternary structure, part of the 50S ribosomal subunit. Forms a cluster with proteins L14 and L19.

In terms of biological role, one of the primary rRNA binding proteins, it binds directly near the 3'-end of the 23S rRNA, where it nucleates assembly of the 50S subunit. This chain is Large ribosomal subunit protein uL3, found in Acetivibrio thermocellus (strain ATCC 27405 / DSM 1237 / JCM 9322 / NBRC 103400 / NCIMB 10682 / NRRL B-4536 / VPI 7372) (Clostridium thermocellum).